The primary structure comprises 260 residues: Thiazole synthase (260 aa).

K96 acts as the Schiff-base intermediate with DXP in catalysis. Residues G157, 184–185, and 206–207 contribute to the 1-deoxy-D-xylulose 5-phosphate site; these read AG and NT.

Belongs to the ThiG family. As to quaternary structure, homotetramer. Forms heterodimers with either ThiH or ThiS.

The protein localises to the cytoplasm. It carries out the reaction [ThiS sulfur-carrier protein]-C-terminal-Gly-aminoethanethioate + 2-iminoacetate + 1-deoxy-D-xylulose 5-phosphate = [ThiS sulfur-carrier protein]-C-terminal Gly-Gly + 2-[(2R,5Z)-2-carboxy-4-methylthiazol-5(2H)-ylidene]ethyl phosphate + 2 H2O + H(+). The protein operates within cofactor biosynthesis; thiamine diphosphate biosynthesis. Its function is as follows. Catalyzes the rearrangement of 1-deoxy-D-xylulose 5-phosphate (DXP) to produce the thiazole phosphate moiety of thiamine. Sulfur is provided by the thiocarboxylate moiety of the carrier protein ThiS. In vitro, sulfur can be provided by H(2)S. The polypeptide is Thiazole synthase (Nitrobacter winogradskyi (strain ATCC 25391 / DSM 10237 / CIP 104748 / NCIMB 11846 / Nb-255)).